The sequence spans 239 residues: Ribosomal RNA large subunit methyltransferase E (239 aa).

Residues 1–20 are disordered; the sequence is MTKAPIAGNRTGRKLGQRVK. Residues 11–20 show a composition bias toward basic residues; sequence TGRKLGQRVK. Positions 81, 83, 104, 120, and 144 each coordinate S-adenosyl-L-methionine. Residue Lys184 is the Proton acceptor of the active site.

The protein belongs to the class I-like SAM-binding methyltransferase superfamily. RNA methyltransferase RlmE family.

The protein localises to the cytoplasm. It catalyses the reaction uridine(2552) in 23S rRNA + S-adenosyl-L-methionine = 2'-O-methyluridine(2552) in 23S rRNA + S-adenosyl-L-homocysteine + H(+). Functionally, specifically methylates the uridine in position 2552 of 23S rRNA at the 2'-O position of the ribose in the fully assembled 50S ribosomal subunit. The protein is Ribosomal RNA large subunit methyltransferase E of Rhizobium johnstonii (strain DSM 114642 / LMG 32736 / 3841) (Rhizobium leguminosarum bv. viciae).